We begin with the raw amino-acid sequence, 217 residues long: External core antigen (217 aa).

The first 20 residues, Met1 to Ala20, serve as a signal peptide directing secretion. Residues Gly26 to Leu28 are HBEAG. Basic residues predominate over residues Arg181 to Pro210. Residues Arg181–Cys217 form a disordered region. The stretch at Ser190–Pro196 is one 1; half-length repeat. The segment at Ser190–Gln211 is 3 X 8 AA approximate repeats of S-P-R-R-R-R-[PS]-Q. The propeptide occupies Ser190 to Cys217. 2 repeat units span residues Ser197 to Gln204 and Ser205 to Gln211.

It belongs to the orthohepadnavirus precore antigen family. Homodimerizes. Post-translationally, phosphorylated. In terms of processing, cleaved by host furin.

It is found in the secreted. Its subcellular location is the host nucleus. In terms of biological role, may regulate immune response to the intracellular capsid in acting as a T-cell tolerogen, by having an immunoregulatory effect which prevents destruction of infected cells by cytotoxic T-cells. This immune regulation may predispose to chronicity during perinatal infections and prevent severe liver injury during adult infections. In Urocitellus parryii kennicottii (ASHV), this protein is External core antigen.